We begin with the raw amino-acid sequence, 475 residues long: Ribonuclease Y (475 aa).

A disordered region spans residues 34-73 (EFERESRERRNELQRVERRLMQKEESLDKKSETLEQKDDR). The KH domain occupies 165 to 228 (TVTVVQLPND…EVARIALEKL (64 aa)). One can recognise an HD domain in the interval 291–384 (VLKHAIEVSH…VTAADAISAA (94 aa)).

Belongs to the RNase Y family.

In terms of biological role, endoribonuclease that initiates mRNA decay. The chain is Ribonuclease Y from Alkaliphilus metalliredigens (strain QYMF).